The chain runs to 263 residues: Indole-3-glycerol phosphate synthase (263 aa).

Belongs to the TrpC family.

It catalyses the reaction 1-(2-carboxyphenylamino)-1-deoxy-D-ribulose 5-phosphate + H(+) = (1S,2R)-1-C-(indol-3-yl)glycerol 3-phosphate + CO2 + H2O. The protein operates within amino-acid biosynthesis; L-tryptophan biosynthesis; L-tryptophan from chorismate: step 4/5. This Desulfosudis oleivorans (strain DSM 6200 / JCM 39069 / Hxd3) (Desulfococcus oleovorans) protein is Indole-3-glycerol phosphate synthase.